A 239-amino-acid chain; its full sequence is Leucyl/phenylalanyl-tRNA--protein transferase (239 aa).

It belongs to the L/F-transferase family.

The protein localises to the cytoplasm. The enzyme catalyses N-terminal L-lysyl-[protein] + L-leucyl-tRNA(Leu) = N-terminal L-leucyl-L-lysyl-[protein] + tRNA(Leu) + H(+). It carries out the reaction N-terminal L-arginyl-[protein] + L-leucyl-tRNA(Leu) = N-terminal L-leucyl-L-arginyl-[protein] + tRNA(Leu) + H(+). It catalyses the reaction L-phenylalanyl-tRNA(Phe) + an N-terminal L-alpha-aminoacyl-[protein] = an N-terminal L-phenylalanyl-L-alpha-aminoacyl-[protein] + tRNA(Phe). Functionally, functions in the N-end rule pathway of protein degradation where it conjugates Leu, Phe and, less efficiently, Met from aminoacyl-tRNAs to the N-termini of proteins containing an N-terminal arginine or lysine. In Aliivibrio fischeri (strain MJ11) (Vibrio fischeri), this protein is Leucyl/phenylalanyl-tRNA--protein transferase.